Consider the following 403-residue polypeptide: Sex hormone-binding globulin (403 aa).

The first 30 residues, Met1–Thr30, serve as a signal peptide directing secretion. Laminin G-like domains are found at residues Lys46–Cys218 and Gly225–Cys391. Cys194 and Cys218 form a disulfide bridge. Asn274 carries an N-linked (GlcNAc...) asparagine glycan. Cys363 and Cys391 form a disulfide bridge. Residue Asn397 is glycosylated (N-linked (GlcNAc...) asparagine).

As to quaternary structure, homodimer. In terms of tissue distribution, isoform 2 is only expressed in the liver.

The protein resides in the secreted. In terms of biological role, functions as an androgen transport protein, but may also be involved in receptor mediated processes. Each dimer binds one molecule of steroid. Specific for 5-alpha-dihydrotestosterone, testosterone, and 17-beta-estradiol. Regulates the plasma metabolic clearance rate of steroid hormones by controlling their plasma concentration. In Rattus norvegicus (Rat), this protein is Sex hormone-binding globulin (Shbg).